The following is a 340-amino-acid chain: Dihydroorotate dehydrogenase (quinone) (340 aa).

FMN-binding positions include 61–65 and Thr85; that span reads AGLDK. Lys65 contributes to the substrate binding site. 110–114 contacts substrate; sequence NRMGF. FMN contacts are provided by Asn138 and Asn171. Asn171 contributes to the substrate binding site. Ser174 acts as the Nucleophile in catalysis. A substrate-binding site is contributed by Asn176. Positions 216 and 244 each coordinate FMN. 245-246 contributes to the substrate binding site; it reads NT. FMN is bound by residues Gly267, Gly296, and 317–318; that span reads YT.

Belongs to the dihydroorotate dehydrogenase family. Type 2 subfamily. Monomer. It depends on FMN as a cofactor.

The protein resides in the cell membrane. The enzyme catalyses (S)-dihydroorotate + a quinone = orotate + a quinol. It functions in the pathway pyrimidine metabolism; UMP biosynthesis via de novo pathway; orotate from (S)-dihydroorotate (quinone route): step 1/1. Functionally, catalyzes the conversion of dihydroorotate to orotate with quinone as electron acceptor. The protein is Dihydroorotate dehydrogenase (quinone) of Marinobacter nauticus (strain ATCC 700491 / DSM 11845 / VT8) (Marinobacter aquaeolei).